A 215-amino-acid chain; its full sequence is Probable GTP-binding protein EngB (215 aa).

The EngB-type G domain maps to E26–P200. GTP-binding positions include G34 to S41, G61 to L65, D79 to G82, T146 to D149, and F179 to S181. Positions 41 and 63 each coordinate Mg(2+).

This sequence belongs to the TRAFAC class TrmE-Era-EngA-EngB-Septin-like GTPase superfamily. EngB GTPase family. Mg(2+) serves as cofactor.

Its function is as follows. Necessary for normal cell division and for the maintenance of normal septation. The sequence is that of Probable GTP-binding protein EngB from Aliivibrio fischeri (strain MJ11) (Vibrio fischeri).